Here is a 314-residue protein sequence, read N- to C-terminus: L-lactate dehydrogenase 2 (314 aa).

Residues Val16, Asp37, Lys42, Tyr68, and 82-83 (GL) contribute to the NAD(+) site. Substrate contacts are provided by residues Gln85, Arg91, and 123–126 (NPVD). Residues 121 to 123 (ATN) and Ser146 each bind NAD(+). 151–154 (DSAR) contacts substrate. Positions 156 and 171 each coordinate beta-D-fructose 1,6-bisphosphate. The active-site Proton acceptor is His178. Tyr223 carries the post-translational modification Phosphotyrosine. Position 232 (Thr232) interacts with substrate.

The protein belongs to the LDH/MDH superfamily. LDH family. As to quaternary structure, homotetramer.

The protein localises to the cytoplasm. The catalysed reaction is (S)-lactate + NAD(+) = pyruvate + NADH + H(+). It functions in the pathway fermentation; pyruvate fermentation to lactate; (S)-lactate from pyruvate: step 1/1. Its activity is regulated as follows. Allosterically activated by fructose 1,6-bisphosphate (FBP). Functionally, catalyzes the conversion of lactate to pyruvate. The chain is L-lactate dehydrogenase 2 from Bacillus cereus (strain ATCC 10987 / NRS 248).